Here is a 174-residue protein sequence, read N- to C-terminus: Secreted cysteine-rich protein UMAG_00792 (174 aa).

A signal peptide spans 1-26 (MVSFKSSSLFLHSLSALLVLTTLSSA). N77 carries an N-linked (GlcNAc...) asparagine glycan.

Secreted cysteine-rich proteins (SCRPs) are predicted to form amyloids.

The protein localises to the secreted. In terms of biological role, secreted cysteine-rich protein that might form amyloid strutures which are involved in attachment to hydrophobic surfaces and in formation of hydrophobic aerial hyphae. This is Secreted cysteine-rich protein UMAG_00792 from Mycosarcoma maydis (Corn smut fungus).